The following is a 333-amino-acid chain: HTH-type transcriptional regulator Cphy_2742 (333 aa).

Residues 1–55 (MNIYDVSQKAGVSIATVSRVINGNPNVSEKTKQKVLDVMKEIGYTPNVFARGLGL) enclose the HTH lacI-type domain. Residues 3–22 (IYDVSQKAGVSIATVSRVIN) constitute a DNA-binding region (H-T-H motif).

It localises to the cytoplasm. In terms of biological role, involved in control of pectin and galacturonic acid metabolism. Probably represses a comprehensive set of pectin fermentation genes by binding a conserved palindrome at or downstream of their transcription start site to block transcription. In the presence of galacturonic acid may activate transcription of acetate synthesis and other aspects of carbon metabolism. The chain is HTH-type transcriptional regulator Cphy_2742 from Lachnoclostridium phytofermentans (strain ATCC 700394 / DSM 18823 / ISDg) (Clostridium phytofermentans).